Here is a 419-residue protein sequence, read N- to C-terminus: Creatine kinase S-type, mitochondrial (419 aa).

A mitochondrion-targeting transit peptide spans 1-39 (MASIFSKLLTGRNASLLFATMGTSVLTTGYLLNRQKVCA). Positions 40–64 (EVREQPRLFPPSADYPDLRKHNNCM) are cardiolipin-binding. The region spanning 46–132 (RLFPPSADYP…FDPVIKLRHN (87 aa)) is the Phosphagen kinase N-terminal domain. The region spanning 159–401 (YVLSSRVRTG…NYLVDCEKKL (243 aa)) is the Phosphagen kinase C-terminal domain. Residues 162–166 (SSRVR) and His225 each bind ATP. Phosphotyrosine is present on Tyr255. ATP contacts are provided by residues Arg270, Arg326, 354–359 (RGTGGV), and Asp369. Thr356 is subject to Phosphothreonine.

Belongs to the ATP:guanido phosphotransferase family. As to quaternary structure, exists as an octamer composed of four CKMT2 homodimers. In terms of tissue distribution, sarcomere-specific. Found only in heart and skeletal muscles.

The protein resides in the mitochondrion inner membrane. It catalyses the reaction creatine + ATP = N-phosphocreatine + ADP + H(+). Reversibly catalyzes the transfer of phosphate between ATP and various phosphogens (e.g. creatine phosphate). Creatine kinase isoenzymes play a central role in energy transduction in tissues with large, fluctuating energy demands, such as skeletal muscle, heart, brain and spermatozoa. The protein is Creatine kinase S-type, mitochondrial (CKMT2) of Homo sapiens (Human).